The chain runs to 429 residues: Protein cereblon (429 aa).

The interval 1-30 (MGNHLPLLPAESEEEDEMEVEDQDSKEAKK) is disordered. Residues 11 to 22 (ESEEEDEMEVED) are compositionally biased toward acidic residues. Serine 12 bears the Phosphoserine mark. The region spanning 68 to 306 (IPVLPQVMMI…CELDIMNKCT (239 aa)) is the Lon N-terminal domain. The CULT domain occupies 305–413 (CTSLCCKQCQ…LTRSALLPTI (109 aa)). Residues cysteine 310 and cysteine 313 each coordinate Zn(2+). Positions 365, 367, and 373 each coordinate (S)-thalidomide. Zn(2+)-binding residues include cysteine 378 and cysteine 381.

Belongs to the CRBN family. As to quaternary structure, component of a DCX (DDB1-CUL4-X-box) protein ligase complex, at least composed of CRBN, CUL4A, DDB1 and RBX1. Interacts directly with DDB1. Interacts with KCNT1. Interacts with ILF2. Interacts with TRAF6 and ECSIT. Post-translationally, ubiquitinated, ubiquitination is mediated by its own DCX protein ligase complex.

The protein resides in the cytoplasm. It is found in the nucleus. Its subcellular location is the membrane. It functions in the pathway protein modification; protein ubiquitination. Substrate recognition component of a DCX (DDB1-CUL4-X-box) E3 protein ligase complex that mediates the ubiquitination and subsequent proteasomal degradation of target proteins, such as MEIS2, ILF2 or GLUL. Normal degradation of key regulatory proteins is required for normal limb outgrowth and expression of the fibroblast growth factor FGF8. Maintains presynaptic glutamate release and consequently cognitive functions, such as memory and learning, by negatively regulating large-conductance calcium-activated potassium (BK) channels in excitatory neurons. Likely to function by regulating the assembly and neuronal surface expression of BK channels via its interaction with KCNT1. May also be involved in regulating anxiety-like behaviors via a BK channel-independent mechanism. Plays a negative role in TLR4 signaling by interacting with TRAF6 and ECSIT, leading to inhibition of ECSIT ubiquitination, an important step of the signaling. This is Protein cereblon (CRBN) from Pongo abelii (Sumatran orangutan).